The chain runs to 401 residues: Exodeoxyribonuclease 7 large subunit (401 aa).

The protein belongs to the XseA family. Heterooligomer composed of large and small subunits.

Its subcellular location is the cytoplasm. The enzyme catalyses Exonucleolytic cleavage in either 5'- to 3'- or 3'- to 5'-direction to yield nucleoside 5'-phosphates.. Its function is as follows. Bidirectionally degrades single-stranded DNA into large acid-insoluble oligonucleotides, which are then degraded further into small acid-soluble oligonucleotides. This chain is Exodeoxyribonuclease 7 large subunit, found in Clostridium botulinum (strain Hall / ATCC 3502 / NCTC 13319 / Type A).